The sequence spans 174 residues: Austinoid biosynthesis clusters protein H (174 aa).

This sequence belongs to the trt14 isomerase family. Homodimer.

Its pathway is secondary metabolite biosynthesis; terpenoid biosynthesis. Part of the gene cluster B that mediates the biosynthesis of austinol and dehydroaustinol, two fungal meroterpenoids. The first step of the pathway is the synthesis of 3,5-dimethylorsellinic acid by the polyketide synthase ausA. 3,5-dimethylorsellinic acid is then prenylated by the polyprenyl transferase ausN. Further epoxidation by the FAD-dependent monooxygenase ausM and cyclization by the probable terpene cyclase ausL lead to the formation of protoaustinoid A. Protoaustinoid A is then oxidized to spiro-lactone preaustinoid A3 by the combined action of the FAD-binding monooxygenases ausB and ausC, and the dioxygenase ausE. Acid-catalyzed keto-rearrangement and ring contraction of the tetraketide portion of preaustinoid A3 by ausJ lead to the formation of preaustinoid A4. The aldo-keto reductase ausK, with the help of ausH, is involved in the next step by transforming preaustinoid A4 into isoaustinone which is in turn hydroxylated by the P450 monooxygenase ausI to form austinolide. Finally, the cytochrome P450 monooxygenase ausG modifies austinolide to austinol. Austinol can be further modified to dehydroaustinol which forms a diffusible complex with diorcinol that initiates conidiation. Due to genetic rearrangements of the clusters and the subsequent loss of some enzymes, the end products of the Emericella nidulans austinoid biosynthesis clusters are austinol and dehydroaustinol, even if additional enzymes, such as the O-acetyltransferase ausQ and the cytochrome P450 monooxygenase ausR are still functional. This chain is Austinoid biosynthesis clusters protein H, found in Emericella nidulans (strain FGSC A4 / ATCC 38163 / CBS 112.46 / NRRL 194 / M139) (Aspergillus nidulans).